The sequence spans 575 residues: uncharacterized protein (575 aa).

In terms of domain architecture, HTH marR-type spans 1–120 (MKLIEHYVAL…YNMWLSEVFG (120 aa)). Positions 26–49 (LTEIADCLFCTERNAKLILHKLEN) form a DNA-binding region, H-T-H motif. Residues 176-490 (EPKPHLVHGW…FGFLHLLLSE (315 aa)) form a solute-binding region region.

It in the C-terminal section; belongs to the bacterial solute-binding protein 5 family.

This is an uncharacterized protein from Bacillus subtilis (strain 168).